Consider the following 229-residue polypeptide: uncharacterized protein (229 aa).

The next 7 membrane-spanning stretches (helical) occupy residues 21–41, 56–76, 83–103, 109–129, 141–161, 162–182, and 202–222; these read IYSLVGMGVGLSAFVSYLMLY, MIYYGAAIIELILVFVASGAA, ALPIFLIYSALNGFTLSFIIV, TVFQAFLSSAAVFFAMSIIGV, AMFAALIGVVVASLINLFIGS, GMMSYVISVISVLIFSGLIAS, and WAVAMALSLYLDFINLFISLL.

Belongs to the BI1 family.

The protein resides in the cell membrane. This is an uncharacterized protein from Streptococcus pyogenes serotype M6 (strain ATCC BAA-946 / MGAS10394).